The following is a 347-amino-acid chain: S-adenosylmethionine:tRNA ribosyltransferase-isomerase (347 aa).

This sequence belongs to the QueA family. As to quaternary structure, monomer.

The protein localises to the cytoplasm. The enzyme catalyses 7-aminomethyl-7-carbaguanosine(34) in tRNA + S-adenosyl-L-methionine = epoxyqueuosine(34) in tRNA + adenine + L-methionine + 2 H(+). The protein operates within tRNA modification; tRNA-queuosine biosynthesis. Transfers and isomerizes the ribose moiety from AdoMet to the 7-aminomethyl group of 7-deazaguanine (preQ1-tRNA) to give epoxyqueuosine (oQ-tRNA). In Pseudomonas paraeruginosa (strain DSM 24068 / PA7) (Pseudomonas aeruginosa (strain PA7)), this protein is S-adenosylmethionine:tRNA ribosyltransferase-isomerase.